We begin with the raw amino-acid sequence, 807 residues long: G-type lectin S-receptor-like serine/threonine-protein kinase At1g61420 (807 aa).

Residues 1–24 (MGKKWIVFFAYLLLSSFFISSSSA) form the signal peptide. The region spanning 25-144 (GITKESPLPI…FSGRTLWQSF (120 aa)) is the Bulb-type lectin domain. Residues 25 to 426 (GITKESPLPI…ELGGNKRKKA (402 aa)) are Extracellular-facing. N-linked (GlcNAc...) asparagine glycosylation is found at asparagine 53, asparagine 94, asparagine 117, asparagine 134, asparagine 236, and asparagine 267. Positions 278–314 (PEHSCDYYGVCGPFGLCVKSVPPKCTCFKGFVPKLIE) constitute an EGF-like; atypical domain. 2 disulfides stabilise this stretch: cysteine 282/cysteine 294 and cysteine 288/cysteine 302. N-linked (GlcNAc...) asparagine glycosylation is found at asparagine 320, asparagine 336, and asparagine 375. Residues 333-413 (CQGNSTGKYA…EGGELLSIRL (81 aa)) enclose the PAN domain. 2 cysteine pairs are disulfide-bonded: cysteine 368/cysteine 389 and cysteine 372/cysteine 378. The chain crosses the membrane as a helical span at residues 427-447 (ITASIVSLSLVVIIAFVAFCF). Topologically, residues 448–807 (WRYRVKHNAD…EMTKSVILGR (360 aa)) are cytoplasmic. Positions 494 to 779 (FSISNKLGQG…DLPPPEQPTF (286 aa)) constitute a Protein kinase domain. ATP contacts are provided by residues 500–508 (LGQGGFGPV) and lysine 522. Phosphoserine occurs at positions 528 and 543. The interval 583–600 (RKRLEIDWPKRLDIIQGI) is caM-binding. The active-site Proton acceptor is aspartate 619. Phosphoserine is present on residues serine 623 and serine 636. Threonine 653 is subject to Phosphothreonine. 2 positions are modified to phosphoserine: serine 696 and serine 790.

The protein belongs to the protein kinase superfamily. Ser/Thr protein kinase family.

The protein localises to the cell membrane. It catalyses the reaction L-seryl-[protein] + ATP = O-phospho-L-seryl-[protein] + ADP + H(+). The catalysed reaction is L-threonyl-[protein] + ATP = O-phospho-L-threonyl-[protein] + ADP + H(+). This Arabidopsis thaliana (Mouse-ear cress) protein is G-type lectin S-receptor-like serine/threonine-protein kinase At1g61420.